We begin with the raw amino-acid sequence, 739 residues long: MICOS complex subunit Mic60 (739 aa).

The disordered stretch occupies residues 23–63 (ANNRQFGGSSSGSGGREQGRRQQEEQGQQGDQGYQGYQSLP). Low complexity predominate over residues 47–61 (EQGQQGDQGYQGYQS). The chain crosses the membrane as a helical span at residues 69–89 (AGFGKVVLFVSPLAAVGGVIT). Residues 154-219 (VTGLFGGGSG…PAAKPKDNPL (66 aa)) form a disordered region. Residues 163–198 (GDDKSKKSKVEPVKATPAEEKRPSKPSEVSKTEAKP) show a composition bias toward basic and acidic residues. Positions 199–212 (VSKPAAAAAPAPAA) are enriched in low complexity. Residues 283–339 (TAVATAERAAREAQEKIVACEIALSAAATAQNAKKVEAVRDKIKKLVDHIGNVKDEL) are a coiled coil.

The protein belongs to the MICOS complex subunit Mic60 family. As to quaternary structure, component of the mitochondrial contact site and cristae organizing system (MICOS) complex. Interacts with the mitochondria-shaping protein Opa1.

Its subcellular location is the mitochondrion inner membrane. In terms of biological role, component of the MICOS complex, a large protein complex of the mitochondrial inner membrane that plays crucial roles in the maintenance of crista junctions, inner membrane architecture, and formation of contact sites to the outer membrane. The chain is MICOS complex subunit Mic60 from Drosophila melanogaster (Fruit fly).